A 193-amino-acid chain; its full sequence is Ribosomal RNA large subunit methyltransferase E (193 aa).

S-adenosyl-L-methionine contacts are provided by G48, F50, D67, N85, and D107. K147 serves as the catalytic Proton acceptor.

The protein belongs to the class I-like SAM-binding methyltransferase superfamily. RNA methyltransferase RlmE family.

Its subcellular location is the cytoplasm. It catalyses the reaction uridine(2552) in 23S rRNA + S-adenosyl-L-methionine = 2'-O-methyluridine(2552) in 23S rRNA + S-adenosyl-L-homocysteine + H(+). Specifically methylates the uridine in position 2552 of 23S rRNA at the 2'-O position of the ribose in the fully assembled 50S ribosomal subunit. The polypeptide is Ribosomal RNA large subunit methyltransferase E (Borrelia duttonii (strain Ly)).